The chain runs to 344 residues: Holliday junction branch migration complex subunit RuvB (344 aa).

The segment at M1–Y183 is large ATPase domain (RuvB-L). ATP is bound by residues I22, R23, G64, K67, T68, T69, E130 to Y132, R173, Y183, and R220. Mg(2+) is bound at residue T68. A small ATPAse domain (RuvB-S) region spans residues T184 to E254. Residues E257–A344 are head domain (RuvB-H). DNA contacts are provided by K312 and R317.

Belongs to the RuvB family. Homohexamer. Forms an RuvA(8)-RuvB(12)-Holliday junction (HJ) complex. HJ DNA is sandwiched between 2 RuvA tetramers; dsDNA enters through RuvA and exits via RuvB. An RuvB hexamer assembles on each DNA strand where it exits the tetramer. Each RuvB hexamer is contacted by two RuvA subunits (via domain III) on 2 adjacent RuvB subunits; this complex drives branch migration. In the full resolvosome a probable DNA-RuvA(4)-RuvB(12)-RuvC(2) complex forms which resolves the HJ.

The protein localises to the cytoplasm. The catalysed reaction is ATP + H2O = ADP + phosphate + H(+). In terms of biological role, the RuvA-RuvB-RuvC complex processes Holliday junction (HJ) DNA during genetic recombination and DNA repair, while the RuvA-RuvB complex plays an important role in the rescue of blocked DNA replication forks via replication fork reversal (RFR). RuvA specifically binds to HJ cruciform DNA, conferring on it an open structure. The RuvB hexamer acts as an ATP-dependent pump, pulling dsDNA into and through the RuvAB complex. RuvB forms 2 homohexamers on either side of HJ DNA bound by 1 or 2 RuvA tetramers; 4 subunits per hexamer contact DNA at a time. Coordinated motions by a converter formed by DNA-disengaged RuvB subunits stimulates ATP hydrolysis and nucleotide exchange. Immobilization of the converter enables RuvB to convert the ATP-contained energy into a lever motion, pulling 2 nucleotides of DNA out of the RuvA tetramer per ATP hydrolyzed, thus driving DNA branch migration. The RuvB motors rotate together with the DNA substrate, which together with the progressing nucleotide cycle form the mechanistic basis for DNA recombination by continuous HJ branch migration. Branch migration allows RuvC to scan DNA until it finds its consensus sequence, where it cleaves and resolves cruciform DNA. This chain is Holliday junction branch migration complex subunit RuvB, found in Syntrophomonas wolfei subsp. wolfei (strain DSM 2245B / Goettingen).